The sequence spans 391 residues: Saxitoxin and tetrodotoxin-binding protein 2 (391 aa).

A signal peptide spans 1–20 (MGAVPGVVLLLMLAVLGIRA). 2 consecutive repeat copies span residues 24–202 (PEEC…HKKS) and 203–391 (PEEC…PEQD). Residues Asn41, Asn54, Asn63, Asn97, Asn234, Asn268, Asn277, and Asn307 are each glycosylated (N-linked (GlcNAc...) asparagine).

Homodimer or heterodimer of PSTBP1 and PSTBP2. In terms of processing, glycosylated.

Its subcellular location is the secreted. In terms of biological role, binds both saxitoxin and tetradotoxin. May play a role in toxin accumulation and/or excretion. The chain is Saxitoxin and tetrodotoxin-binding protein 2 (psbp2) from Takifugu pardalis (Panther puffer).